The sequence spans 384 residues: L-aspartate decarboxylase (384 aa).

The residue at position 231 (lysine 231) is an N6-(pyridoxal phosphate)lysine.

It belongs to the group II decarboxylase family. MfnA subfamily. As to quaternary structure, homodimer. Can also form homohexamers. The cofactor is pyridoxal 5'-phosphate.

The enzyme catalyses L-aspartate + H(+) = beta-alanine + CO2. It participates in cofactor biosynthesis; coenzyme A biosynthesis. Inhibited by hydroxylamine. Its function is as follows. Catalyzes the decarboxylation of L-aspartate to produce beta-alanine. In vitro, can also catalyze the decarboxylation of L-glutamate to produce 4-aminobutanoate, but this activity does not seem necessary in vivo. Shows much higher activity with L-aspartate than with L-glutamate. Does not decarboxylate L-tyrosine. This chain is L-aspartate decarboxylase, found in Thermococcus kodakarensis (strain ATCC BAA-918 / JCM 12380 / KOD1) (Pyrococcus kodakaraensis (strain KOD1)).